Here is a 317-residue protein sequence, read N- to C-terminus: Transaldolase (317 aa).

Lys-132 (schiff-base intermediate with substrate) is an active-site residue.

Belongs to the transaldolase family. Type 1 subfamily. In terms of assembly, homodimer.

The protein resides in the cytoplasm. The catalysed reaction is D-sedoheptulose 7-phosphate + D-glyceraldehyde 3-phosphate = D-erythrose 4-phosphate + beta-D-fructose 6-phosphate. Its pathway is carbohydrate degradation; pentose phosphate pathway; D-glyceraldehyde 3-phosphate and beta-D-fructose 6-phosphate from D-ribose 5-phosphate and D-xylulose 5-phosphate (non-oxidative stage): step 2/3. In terms of biological role, transaldolase is important for the balance of metabolites in the pentose-phosphate pathway. The polypeptide is Transaldolase (Mannheimia succiniciproducens (strain KCTC 0769BP / MBEL55E)).